The following is a 198-amino-acid chain: MGLGVLCLALVLLGVLQSQAQDSTQNLIPAPPLISVPLQPGFWTERFQGRWFVVGLAGNAVQKERQSRFTMYSTIYELQEDNSYNVTSILVRGQGCRYWIRTFVPSSRPGQFTLGNIHSYPQIQSYDVQVADTDYDQFAMVFFQKTSENKQYFKVTLYGRTKGLSDELKERFVSFAKSLGLKDNNIVFSVPTDQCIDN.

The signal sequence occupies residues 1–20 (MGLGVLCLALVLLGVLQSQA). Position 21 is a pyrrolidone carboxylic acid (Gln21). Residue 72–74 (YST) coordinates a carboxymycobactin. Asn85 carries N-linked (GlcNAc...) asparagine glycosylation. Cys96 and Cys195 are joined by a disulfide. Tyr126 provides a ligand contact to enterobactin. 3 residues coordinate a carboxymycobactin: Lys145, Lys154, and Tyr158. Residue Lys154 participates in enterobactin binding.

This sequence belongs to the calycin superfamily. Lipocalin family. Monomer. Homodimer; disulfide-linked. Heterodimer; disulfide-linked with MMP9. In terms of tissue distribution, detected in the ureteric bud in embryonic kidney (at protein level).

The protein localises to the secreted. Its subcellular location is the cytoplasmic granule lumen. The protein resides in the cytoplasmic vesicle lumen. Iron-trafficking protein involved in multiple processes such as apoptosis, innate immunity and renal development. Binds iron through association with 2,3-dihydroxybenzoic acid (2,3-DHBA), a siderophore that shares structural similarities with bacterial enterobactin, and delivers or removes iron from the cell, depending on the context. Iron-bound form (holo-24p3) is internalized following binding to the SLC22A17 (24p3R) receptor, leading to release of iron and subsequent increase of intracellular iron concentration. In contrast, association of the iron-free form (apo-24p3) with the SLC22A17 (24p3R) receptor is followed by association with an intracellular siderophore, iron chelation and iron transfer to the extracellular medium, thereby reducing intracellular iron concentration. Involved in apoptosis due to interleukin-3 (IL3) deprivation: iron-loaded form increases intracellular iron concentration without promoting apoptosis, while iron-free form decreases intracellular iron levels, inducing expression of the proapoptotic protein BCL2L11/BIM, resulting in apoptosis. Involved in innate immunity; limits bacterial proliferation by sequestering iron bound to microbial siderophores, such as enterobactin. Can also bind siderophores from M.tuberculosis. In Rattus norvegicus (Rat), this protein is Neutrophil gelatinase-associated lipocalin (Lcn2).